The following is a 421-amino-acid chain: 3-isopropylmalate dehydratase large subunit (421 aa).

[4Fe-4S] cluster-binding residues include C300, C360, and C363.

Belongs to the aconitase/IPM isomerase family. LeuC type 2 subfamily. Heterodimer of LeuC and LeuD. It depends on [4Fe-4S] cluster as a cofactor.

It carries out the reaction (2R,3S)-3-isopropylmalate = (2S)-2-isopropylmalate. The protein operates within amino-acid biosynthesis; L-leucine biosynthesis; L-leucine from 3-methyl-2-oxobutanoate: step 2/4. Functionally, catalyzes the isomerization between 2-isopropylmalate and 3-isopropylmalate, via the formation of 2-isopropylmaleate. This Lachnoclostridium phytofermentans (strain ATCC 700394 / DSM 18823 / ISDg) (Clostridium phytofermentans) protein is 3-isopropylmalate dehydratase large subunit.